A 210-amino-acid chain; its full sequence is Ribonuclease HII (210 aa).

One can recognise an RNase H type-2 domain in the interval 18-210; it reads GLIAGVDEVG…FKPVKALLGL (193 aa). A divalent metal cation contacts are provided by Asp-24, Glu-25, and Asp-116.

This sequence belongs to the RNase HII family. The cofactor is Mn(2+). Requires Mg(2+) as cofactor.

Its subcellular location is the cytoplasm. It catalyses the reaction Endonucleolytic cleavage to 5'-phosphomonoester.. In terms of biological role, endonuclease that specifically degrades the RNA of RNA-DNA hybrids. This Shewanella baltica (strain OS223) protein is Ribonuclease HII.